The sequence spans 112 residues: T cell receptor alpha variable 34 (112 aa).

Residues 1–21 (METVLQVLLGILGFQAAWVSS) form the signal peptide. The Ig-like domain occupies 22–112 (QELEQSPQSL…HAGIYLCGAD (91 aa)). N-linked (GlcNAc...) asparagine glycans are attached at residues Asn38 and Asn42. A disulfide bond links Cys43 and Cys109.

In terms of assembly, alpha-beta TR is a heterodimer composed of an alpha and beta chain; disulfide-linked. The alpha-beta TR is associated with the transmembrane signaling CD3 coreceptor proteins to form the TR-CD3 (TcR or TCR). The assembly of alpha-beta TR heterodimers with CD3 occurs in the endoplasmic reticulum where a single alpha-beta TR heterodimer associates with one CD3D-CD3E heterodimer, one CD3G-CD3E heterodimer and one CD247 homodimer forming a stable octameric structure. CD3D-CD3E and CD3G-CD3E heterodimers preferentially associate with TR alpha and TR beta chains, respectively. The association of the CD247 homodimer is the last step of TcR assembly in the endoplasmic reticulum and is required for transport to the cell surface.

It is found in the cell membrane. V region of the variable domain of T cell receptor (TR) alpha chain that participates in the antigen recognition. Alpha-beta T cell receptors are antigen specific receptors which are essential to the immune response and are present on the cell surface of T lymphocytes. Recognize peptide-major histocompatibility (MH) (pMH) complexes that are displayed by antigen presenting cells (APC), a prerequisite for efficient T cell adaptive immunity against pathogens. Binding of alpha-beta TR to pMH complex initiates TR-CD3 clustering on the cell surface and intracellular activation of LCK that phosphorylates the ITAM motifs of CD3G, CD3D, CD3E and CD247 enabling the recruitment of ZAP70. In turn ZAP70 phosphorylates LAT, which recruits numerous signaling molecules to form the LAT signalosome. The LAT signalosome propagates signal branching to three major signaling pathways, the calcium, the mitogen-activated protein kinase (MAPK) kinase and the nuclear factor NF-kappa-B (NF-kB) pathways, leading to the mobilization of transcription factors that are critical for gene expression and essential for T cell growth and differentiation. The T cell repertoire is generated in the thymus, by V-(D)-J rearrangement. This repertoire is then shaped by intrathymic selection events to generate a peripheral T cell pool of self-MH restricted, non-autoaggressive T cells. Post-thymic interaction of alpha-beta TR with the pMH complexes shapes TR structural and functional avidity. The protein is T cell receptor alpha variable 34 of Homo sapiens (Human).